A 147-amino-acid polypeptide reads, in one-letter code: Male-specific protein scotti (147 aa).

Residues 55-93 (PQEPPLGVFPAQGGPNGPPRRRKKRSFYTMTKPTPPCQS) form a disordered region. Over residues 82–93 (YTMTKPTPPCQS) the composition is skewed to polar residues. Residue Asn-128 is glycosylated (N-linked (GlcNAc...) asparagine).

It belongs to the male-specific scotti family. Expressed in primary spermatocytes and round spermatids. Low expression is seen in very short elongating cysts, but were detected at high levels in a few longer spermatid cysts.

In terms of biological role, post-meiotically transcribed gene that has a role in late spermiogenesis; required for actin cone progression during spermatid individualization. The polypeptide is Male-specific protein scotti (Drosophila melanogaster (Fruit fly)).